The primary structure comprises 1591 residues: MGNAESQHVEHEFYGEKHASLGRKHTSRSLRLSHKTRRTRHASSGKVIHRNSEVSTRSSSTPSIPQSLAENGLEPFSQDGTLEDFGSPIWVDRVDMGLRPVSYTDSSVTPSVDSSIVLTAASVQSMPDTEESRLYGDDATYLAEGGRRQHSYTSNGPTFMETASFKKKRSKSADIWREDSLEFSLSDLSQEHLTSNEEILGSAEEKDCEEARGMETRASPRQLSTCQRANSLGDLYAQKNSGVTANGGPGSKFAGYCRNLVSDIPNLANHKMPPAAAEETPPYSNYNTLPCRKSHCLSEGATNPQISHSNSMQGRRAKTTQDVNAGEGSEFADSGIEGATTDTDLLSRRSNATNSSYSPTTGRAFVGSDSGSSSTGDAARQGVYENFRRELEMSTTNSESLEEAGSAHSDEQSSGTLSSPGQSDILLTAAQGTVRKAGALAVKNFLVHKKNKKVESATRRKWKHYWVSLKGCTLFFYESDGRSGIDHNSIPKHAVWVENSIVQAVPEHPKKDFVFCLSNSLGDAFLFQTTSQTELENWITAIHSACATAVARHHHKEDTLRLLKSEIKKLEQKIDMDEKMKKMGEMQLSSVTDSKKKKTILDQIFVWEQNLEQFQMDLFRFRCYLASLQGGELPNPKRLLAFASRPTKVAMGRLGIFSVSSFHALVAARTGETGVRRRTQAMSRSASKRRSRFSSLWGLDTTSKKKQGRPSINQVFGEGTEAVKKSLEGIFDDIVPDGKREKEVVLPNVHQHNPDCDIWVHEYFTPSWFCLPNNQPALTVVRPGDTARDTLELICKTHQLDHSAHYLRLKFLIENKMQLYVPQPEEDIYELLYKEIEICPKVTQSIHIEKSDTAADTYGFSLSSVEEDGIRRLYVNSVKETGLASKKGLKAGDEILEINNRAADALNSSMLKDFLSQPSLGLLVRTYPELEEGVELLESPPHRVDGPADLGESPLAFLTSNPGHSLCSEQGSSAETAPEETEGPDLESSDETDHSSKSTEQVAAFCRSLHEMNPSDQSPSPQDSTGPQLATMRQLSDADKLRKVICELLETERTYVKDLNCLMERYLKPLQKETFLTQDELDVLFGNLTEMVEFQVEFLKTLEDGVRLVPDLEKLEKVDQFKKVLFSLGGSFLYYADRFKLYSAFCASHTKVPKVLVKAKTDTAFKAFLDAQNPKQQHSSTLESYLIKPIQRILKYPLLLRELFALTDAESEEHYHLDVAIKTMNKVASHINEMQKIHEEFGAVFDQLIAEQTGEKKEVADLSMGDLLLHTTVIWLNPPASLGKWKKEPELAAFVFKTAVVLVYKDGSKQKKKLVGSHRLSIYEDWDPFRFRHMIPTEALQVRALASADAEANAVCEIVHVKSESEGRPERVFHLCCSSPESRKDFLKAVHSILRDKHRRQLLKTESLPSSQQYVPFGGKRLCALKGARPAMSRAVSAPSKSLGRRRRRLARNRFTIDSDAVSASSPEKESQQPPGGGDTDRWVEEQFDLAQYEEQDDIKETDILSDDDEFCESVKGASVDRDLQERLQATSISQRERGRKTLDSHASRMAQLKKQAALSGINGGLESASEEVIWVRREDFAPSRKLNTEI.

The segment at 1 to 78 is disordered; it reads MGNAESQHVE…AENGLEPFSQ (78 aa). Glycine 2 carries N-myristoyl glycine lipidation. The span at 7–19 shows a compositional bias: basic and acidic residues; sequence QHVEHEFYGEKHA. The segment covering 20–49 has biased composition (basic residues); the sequence is SLGRKHTSRSLRLSHKTRRTRHASSGKVIH. The span at 53–67 shows a compositional bias: low complexity; the sequence is EVSTRSSSTPSIPQS. The residue at position 231 (serine 231) is a Phosphoserine. Disordered regions lie at residues 298 to 379 and 393 to 422; these read SEGA…GDAA and MSTT…SPGQ. 2 stretches are compositionally biased toward polar residues: residues 300–313 and 340–361; these read GATN…NSMQ and TTDT…SPTT. 2 positions are modified to phosphoserine: serine 356 and serine 358. Positions 367-377 are enriched in low complexity; that stretch reads GSDSGSSSTGD. Over residues 412-422 the composition is skewed to polar residues; the sequence is QSSGTLSSPGQ. The region spanning 434-549 is the PH 1 domain; sequence VRKAGALAVK…TAIHSACATA (116 aa). Phosphoserine is present on serine 695. The 68-residue stretch at 765-832 folds into the RBD domain; the sequence is TPSWFCLPNN…QPEEDIYELL (68 aa). Tyrosine 829 carries the phosphotyrosine; by NTRK2 modification. The PDZ domain occupies 845–908; the sequence is SIHIEKSDTA…NNRAADALNS (64 aa). Residues 939 to 1034 are disordered; that stretch reads SPPHRVDGPA…TGPQLATMRQ (96 aa). The span at 958–975 shows a compositional bias: polar residues; it reads LTSNPGHSLCSEQGSSAE. A compositionally biased stretch (acidic residues) spans 977-990; that stretch reads APEETEGPDLESSD. Over residues 1014–1024 the composition is skewed to low complexity; that stretch reads PSDQSPSPQDS. Positions 1025–1034 are enriched in polar residues; sequence TGPQLATMRQ. The region spanning 1040–1234 is the DH domain; sequence KLRKVICELL…NKVASHINEM (195 aa). The region spanning 1261–1397 is the PH 2 domain; sequence DLSMGDLLLH…KAVHSILRDK (137 aa). Tyrosine 1323 is subject to Phosphotyrosine. Glycyl lysine isopeptide (Lys-Gly) (interchain with G-Cter in ubiquitin) cross-links involve residues lysine 1404 and lysine 1420. The segment at 1456–1482 is disordered; sequence TIDSDAVSASSPEKESQQPPGGGDTDR. At serine 1519 the chain carries Phosphoserine.

The protein belongs to the TIAM family. In terms of assembly, component of the Par polarity complex, composed of at least phosphorylated PRKCZ, PARD3 and TIAM1. Interacts with NTRK2; mediates the activation of RAC1 by BDNF. Interacts with MAPK8IP2 and CD44. Interacts with BAIAP2. Interacts with EPHA8; regulates clathrin-mediated endocytosis of EPHA8. Interacts with PARD3. Interacts (via PDZ domain) with CNTNAP4, SDC1 and SDC3 (via C-terminus). Ubiquitinated. Undergoes 'Lys-48' ubiquitination at Lys-1404 and Lys-1420 by a CUL3(KBTBD6/7) E3 ubiquitin ligase complex composed of CUL3, RBX1, KBTBD6 and KBTBD7. 'Lys-48' ubiquitination at Lys-1404 and Lys-1420 triggers proteasomal degradation. Ubiquitination at Lys-1404 and Lys-1420 by CUL3(KBTBD6/7) also requires the membrane-associated protein GABARAP and may therefore be spatially restricted within the cell. Found in virtually all analyzed tumor cell lines including B- and T-lymphomas, neuroblastomas, melanomas and carcinomas.

It is found in the cell junction. The protein resides in the cell membrane. Functionally, guanyl-nucleotide exchange factor that activates RHO-like proteins and connects extracellular signals to cytoskeletal activities. Activates RAC1, CDC42, and to a lesser extent RHOA and their downstream signaling to regulate processes like cell adhesion and cell migration. The chain is Rho guanine nucleotide exchange factor TIAM1 from Homo sapiens (Human).